A 603-amino-acid chain; its full sequence is Cholinesterase (603 aa).

The first 29 residues, Met-1–Thr-29, serve as a signal peptide directing secretion. The N-linked (GlcNAc...) asparagine glycan is linked to Asn-86. A disulfide bridge connects residues Cys-94 and Cys-121. The N-linked (GlcNAc...) asparagine glycan is linked to Asn-135. Gly-145–Gly-146 provides a ligand contact to substrate. Ser-227 acts as the Acyl-ester intermediate in catalysis. A Phosphoserine modification is found at Ser-227. An N-linked (GlcNAc...) asparagine glycan is attached at Asn-270. Residues Cys-281 and Cys-292 are joined by a disulfide bond. Glu-354 serves as the catalytic Charge relay system. N-linked (GlcNAc...) asparagine glycosylation occurs at Asn-370. A disulfide bridge links Cys-429 with Cys-548. His-467 acts as the Charge relay system in catalysis. Residues Asn-484, Asn-510, and Asn-515 are each glycosylated (N-linked (GlcNAc...) asparagine).

Belongs to the type-B carboxylesterase/lipase family. In terms of assembly, homotetramer; disulfide-linked. Dimer of dimers. Present in most cells except erythrocytes.

It is found in the secreted. It carries out the reaction an acylcholine + H2O = a carboxylate + choline + H(+). In terms of biological role, esterase with broad substrate specificity. Contributes to the inactivation of the neurotransmitter acetylcholine. Can degrade neurotoxic organophosphate esters. This Mus musculus (Mouse) protein is Cholinesterase (Bche).